A 215-amino-acid chain; its full sequence is Cytochrome b6 (215 aa).

A helical transmembrane segment spans residues 32-52 (IFYCLGGITLTCFLVQVATGF). A heme c-binding site is contributed by cysteine 35. The heme b site is built by histidine 86 and histidine 100. 3 helical membrane-spanning segments follow: residues 90–110 (ASMMVLMMILHVFRVYLTGGF), 116–136 (LTWVTGVVLAVLTASFGVTGY), and 186–206 (LHTFVLPLLTAVFMLMHFPMI). Histidine 187 and histidine 202 together coordinate heme b.

This sequence belongs to the cytochrome b family. PetB subfamily. The 4 large subunits of the cytochrome b6-f complex are cytochrome b6, subunit IV (17 kDa polypeptide, PetD), cytochrome f and the Rieske protein, while the 4 small subunits are PetG, PetL, PetM and PetN. The complex functions as a dimer. Requires heme b as cofactor. Heme c is required as a cofactor.

The protein localises to the plastid. Its subcellular location is the chloroplast thylakoid membrane. Component of the cytochrome b6-f complex, which mediates electron transfer between photosystem II (PSII) and photosystem I (PSI), cyclic electron flow around PSI, and state transitions. The sequence is that of Cytochrome b6 from Saccharum hybrid (Sugarcane).